The sequence spans 1176 residues: Surface-layer 125 kDa protein (1176 aa).

The N-terminal stretch at 1-30 is a signal peptide; it reads MAKQNKGRKFFAASATAALVASAIVPVASA. SLH domains are found at residues 31–88, 89–152, and 153–216; these read AQLN…LEAE, GDVN…DLSE, and FADA…PKVD.

The protein localises to the secreted. It is found in the cell wall. It localises to the S-layer. Its function is as follows. The S-layer is a paracrystalline mono-layered assembly of proteins which coat the surface of bacteria. This Lysinibacillus sphaericus (Bacillus sphaericus) protein is Surface-layer 125 kDa protein.